The following is a 351-amino-acid chain: Uroporphyrinogen decarboxylase (351 aa).

Substrate contacts are provided by residues 25–29 (RQAGR), Asp74, Tyr151, Ser206, and His325.

This sequence belongs to the uroporphyrinogen decarboxylase family. As to quaternary structure, homodimer.

Its subcellular location is the cytoplasm. The enzyme catalyses uroporphyrinogen III + 4 H(+) = coproporphyrinogen III + 4 CO2. Its pathway is porphyrin-containing compound metabolism; protoporphyrin-IX biosynthesis; coproporphyrinogen-III from 5-aminolevulinate: step 4/4. Functionally, catalyzes the decarboxylation of four acetate groups of uroporphyrinogen-III to yield coproporphyrinogen-III. This Chlorobium phaeobacteroides (strain DSM 266 / SMG 266 / 2430) protein is Uroporphyrinogen decarboxylase.